Here is a 189-residue protein sequence, read N- to C-terminus: MSEYIRNQILGIADNFKALASMAGDIEQVARICTDTLKAGNKIMFCGNGGSAADSQHLAAELVGRYKLNRPAMNALALTVDTSILTAVGNDYGYETVFSRQLEGVGRPGDLLVGLSTSGNSRNIVLAMELARRMGVRTVALTGRGGGEMKEVAEFCIAVPSDATNNIQEMHIAVGHLVCELVEREIYGG.

One can recognise an SIS domain in the interval 33-189; sequence CTDTLKAGNK…ELVEREIYGG (157 aa). 48 to 50 contributes to the substrate binding site; that stretch reads NGG. Residues histidine 57 and glutamate 61 each contribute to the Zn(2+) site. Substrate-binding positions include glutamate 61, 90-91, 116-118, serine 121, and glutamine 168; these read ND and STS. Zn(2+) contacts are provided by glutamine 168 and histidine 176.

This sequence belongs to the SIS family. GmhA subfamily. The cofactor is Zn(2+).

The protein resides in the cytoplasm. It catalyses the reaction 2 D-sedoheptulose 7-phosphate = D-glycero-alpha-D-manno-heptose 7-phosphate + D-glycero-beta-D-manno-heptose 7-phosphate. It functions in the pathway carbohydrate biosynthesis; D-glycero-D-manno-heptose 7-phosphate biosynthesis; D-glycero-alpha-D-manno-heptose 7-phosphate and D-glycero-beta-D-manno-heptose 7-phosphate from sedoheptulose 7-phosphate: step 1/1. Its function is as follows. Catalyzes the isomerization of sedoheptulose 7-phosphate in D-glycero-D-manno-heptose 7-phosphate. The polypeptide is Phosphoheptose isomerase (Akkermansia muciniphila (strain ATCC BAA-835 / DSM 22959 / JCM 33894 / BCRC 81048 / CCUG 64013 / CIP 107961 / Muc)).